The sequence spans 388 residues: Succinate--CoA ligase [ADP-forming] subunit beta (388 aa).

Residues 9–244 form the ATP-grasp domain; sequence KEILRKFGVA…PDEEDPKETQ (236 aa). ATP is bound by residues K46, 53 to 55, E99, C102, and E107; that span reads GRG. N199 and D213 together coordinate Mg(2+). Substrate-binding positions include N264 and 321–323; that span reads GIM.

It belongs to the succinate/malate CoA ligase beta subunit family. As to quaternary structure, heterotetramer of two alpha and two beta subunits. It depends on Mg(2+) as a cofactor.

It catalyses the reaction succinate + ATP + CoA = succinyl-CoA + ADP + phosphate. The catalysed reaction is GTP + succinate + CoA = succinyl-CoA + GDP + phosphate. It functions in the pathway carbohydrate metabolism; tricarboxylic acid cycle; succinate from succinyl-CoA (ligase route): step 1/1. In terms of biological role, succinyl-CoA synthetase functions in the citric acid cycle (TCA), coupling the hydrolysis of succinyl-CoA to the synthesis of either ATP or GTP and thus represents the only step of substrate-level phosphorylation in the TCA. The beta subunit provides nucleotide specificity of the enzyme and binds the substrate succinate, while the binding sites for coenzyme A and phosphate are found in the alpha subunit. This is Succinate--CoA ligase [ADP-forming] subunit beta from Anaeromyxobacter dehalogenans (strain 2CP-C).